The chain runs to 461 residues: tRNA modification GTPase MnmE (461 aa).

(6S)-5-formyl-5,6,7,8-tetrahydrofolate-binding residues include R23, E88, and R127. The 161-residue stretch at 223-383 (GLNTVIVGKP…LKECIKNLFF (161 aa)) folds into the TrmE-type G domain. N233 is a binding site for K(+). Residues 233-238 (NVGKSS), 252-258 (TEIPGTT), and 277-280 (DTAG) each bind GTP. S237 serves as a coordination point for Mg(2+). Residues T252, I254, and T257 each contribute to the K(+) site. T258 lines the Mg(2+) pocket. Position 461 (K461) interacts with (6S)-5-formyl-5,6,7,8-tetrahydrofolate.

It belongs to the TRAFAC class TrmE-Era-EngA-EngB-Septin-like GTPase superfamily. TrmE GTPase family. As to quaternary structure, homodimer. Heterotetramer of two MnmE and two MnmG subunits. K(+) serves as cofactor.

It localises to the cytoplasm. Exhibits a very high intrinsic GTPase hydrolysis rate. Involved in the addition of a carboxymethylaminomethyl (cmnm) group at the wobble position (U34) of certain tRNAs, forming tRNA-cmnm(5)s(2)U34. This chain is tRNA modification GTPase MnmE, found in Clostridium botulinum (strain Loch Maree / Type A3).